The following is a 92-amino-acid chain: Signal recognition particle 19 kDa protein (92 aa).

It belongs to the SRP19 family. In terms of assembly, part of the signal recognition particle protein translocation system, which is composed of SRP and FtsY. Archaeal SRP consists of a 7S RNA molecule of 300 nucleotides and two protein subunits: SRP54 and SRP19.

The protein localises to the cytoplasm. Functionally, involved in targeting and insertion of nascent membrane proteins into the cytoplasmic membrane. Binds directly to 7S RNA and mediates binding of the 54 kDa subunit of the SRP. The polypeptide is Signal recognition particle 19 kDa protein (Halorubrum lacusprofundi (strain ATCC 49239 / DSM 5036 / JCM 8891 / ACAM 34)).